Here is a 368-residue protein sequence, read N- to C-terminus: Nuclease EXOG, mitochondrial (368 aa).

A mitochondrion-targeting transit peptide spans Met1–Ser41. The active-site Proton acceptor is the His140. Asn171 lines the a divalent metal cation pocket.

Belongs to the DNA/RNA non-specific endonuclease family. As to quaternary structure, homodimer. A divalent metal cation is required as a cofactor. As to expression, ubiquitous.

It is found in the mitochondrion inner membrane. Its function is as follows. Endo/exonuclease with nicking activity towards supercoiled DNA, a preference for single-stranded DNA and 5'-3' exonuclease activity. In Homo sapiens (Human), this protein is Nuclease EXOG, mitochondrial (EXOG).